A 739-amino-acid polypeptide reads, in one-letter code: Disintegrin and metalloproteinase domain-containing protein 18 (739 aa).

A signal peptide spans 1–16 (MFLLLALLTELGRLQA). Residues 17–184 (HEGSEGIFLH…IKNLSKLLPQ (168 aa)) constitute a propeptide that is removed on maturation. N-linked (GlcNAc...) asparagine glycosylation is found at N36, N76, N122, N149, N156, N177, and N294. Residues 177 to 687 (NLSKLLPQYL…EKGYNTHWNN (511 aa)) lie on the Extracellular side of the membrane. Residues 184-381 (QYLEIYIIVE…FETKCLQKLS (198 aa)) form the Peptidase M12B domain. 4 disulfide bridges follow: C293–C376, C335–C360, C337–C342, and C450–C471. Residues N359, N465, N561, N611, and N625 are each glycosylated (N-linked (GlcNAc...) asparagine). The 90-residue stretch at 390-479 (QPVCGNGILE…NCVPDTYALN (90 aa)) folds into the Disintegrin domain. The EGF-like domain occupies 620–654 (MGYNCNATTKCKGKGICNNFGNCQCFPGHRPPDCK). Intrachain disulfides connect C624/C636, C630/C642, and C644/C653. A helical membrane pass occupies residues 688-708 (WFILSFCIFLPFFIVFTTVIF). Residues 709 to 739 (KRNEISKSCNRENAEYNRNSSVVSESDDVGH) lie on the Cytoplasmic side of the membrane.

Post-translationally, the prodomain and the metalloprotease-like domain are cleaved during the epididymal maturation of the spermatozoa. Expressed specifically in testis.

It is found in the membrane. In terms of biological role, sperm surface membrane protein that may be involved in spermatogenesis and fertilization. This is a non catalytic metalloprotease-like protein. The polypeptide is Disintegrin and metalloproteinase domain-containing protein 18 (ADAM18) (Homo sapiens (Human)).